A 609-amino-acid polypeptide reads, in one-letter code: Mitochondrial nucleoid-associated protein 1 (609 aa).

Over 1–552 (MSDNPPRMEV…IRCNTTIRKS (552 aa)) the chain is Mitochondrial matrix. 3 disordered regions span residues 142–168 (ASEKTSPKRELAKDLPKSGESRCNPSE), 183–202 (SNQDRKYSSTLPNDVQTTSG), and 410–441 (QLSLEPKSDSQFQASHTGCQSPLCSAQRHTPQ). The segment covering 146-161 (TSPKRELAKDLPKSGE) has biased composition (basic and acidic residues). Polar residues predominate over residues 418–441 (DSQFQASHTGCQSPLCSAQRHTPQ). The chain crosses the membrane as a helical span at residues 553-573 (GFGGITMLFTGYFVLCCSWSF). Residues 574–609 (RRLKKLCRPLPWKSTVPPCIGVAKTTGDCRSKTCLD) lie on the Mitochondrial intermembrane side of the membrane.

Its subcellular location is the mitochondrion inner membrane. It localises to the mitochondrion matrix. The protein resides in the mitochondrion nucleoid. Functionally, critical regulator of mitochondrial DNA (mtDNA) abundance. Binds dsDNA throughout the mitochondrial genome without sequence specificity and controls mtDNA copy number by promoting its replication. Also plays important roles in mitochondrial metabolism and cell proliferation. The protein is Mitochondrial nucleoid-associated protein 1 of Homo sapiens (Human).